Reading from the N-terminus, the 282-residue chain is 2-dehydro-3-deoxyphosphooctonate aldolase (282 aa).

It belongs to the KdsA family.

The protein resides in the cytoplasm. The catalysed reaction is D-arabinose 5-phosphate + phosphoenolpyruvate + H2O = 3-deoxy-alpha-D-manno-2-octulosonate-8-phosphate + phosphate. It functions in the pathway carbohydrate biosynthesis; 3-deoxy-D-manno-octulosonate biosynthesis; 3-deoxy-D-manno-octulosonate from D-ribulose 5-phosphate: step 2/3. It participates in bacterial outer membrane biogenesis; lipopolysaccharide biosynthesis. The chain is 2-dehydro-3-deoxyphosphooctonate aldolase from Shewanella woodyi (strain ATCC 51908 / MS32).